We begin with the raw amino-acid sequence, 73 residues long: Putative sodium channel toxin Ts39 (73 aa).

An N-terminal signal peptide occupies residues 1–22 (MKTLNFCLFLVIISSLTVRVFC). Positions 24–73 (NDRFLTVNDNYVICLYINKSFVNCENLCKAYMNAKDGFCRQPHCFCTDVE) constitute an LCN-type CS-alpha/beta domain. Intrachain disulfides connect C37-C62, C47-C67, and C51-C69.

The protein belongs to the long (3 C-C) scorpion toxin superfamily. Sodium channel inhibitor family. Expressed by the venom gland.

The protein resides in the secreted. Functionally, putative sodium channel toxin. This Tityus serrulatus (Brazilian scorpion) protein is Putative sodium channel toxin Ts39.